Here is a 465-residue protein sequence, read N- to C-terminus: Muscarinic acetylcholine receptor M2 (465 aa).

At 1 to 21 (MNNSTNSSNNVALTSPYKTFE) the chain is on the extracellular side. Asn-2, Asn-3, and Asn-6 each carry an N-linked (GlcNAc...) asparagine glycan. A helical transmembrane segment spans residues 22-44 (VVFIVLVAGSLSLVTIIGNILVM). At 45–58 (VSIKVNRHLQTVNN) the chain is on the cytoplasmic side. The helical transmembrane segment at 59–79 (YFLFSLACADLIIGVFSMNLY) threads the bilayer. The Extracellular segment spans residues 80–96 (TLYTVIGYWPLGPVVCD). Cys-95 and Cys-175 are joined by a disulfide. The chain crosses the membrane as a helical span at residues 97-118 (LWLALDYVVSNASVMNLLIISF). The short motif at 119–121 (DRY) is the Important for signaling element. At 119–138 (DRYFCVTKPLTYPVKRTTKM) the chain is on the cytoplasmic side. Residues 139-161 (AGMMIAAAWVLSFILWAPAILFW) traverse the membrane as a helical segment. The Extracellular segment spans residues 162–183 (QFIVGVRTVEDGECYIQFFSNA). The helical transmembrane segment at 184 to 208 (AVTFGTAIAAFYLPVIIMTVLYWHI) threads the bilayer. The Cytoplasmic segment spans residues 209 to 386 (SRASKSRIKK…PPSREKKVTR (178 aa)). The tract at residues 217-319 (KKDKKEPVAN…SVGHSKDENS (103 aa)) is disordered. The residue at position 231 (Ser-231) is a Phosphoserine. The span at 253-269 (GLEHNKIQNGKTPRDAV) shows a compositional bias: basic and acidic residues. Composition is skewed to polar residues over residues 283–292 (NDSTSVSAVA) and 303–312 (DENTVSTSVG). The helical transmembrane segment at 387–409 (TILAILLAFIITWAPYNVMVLIN) threads the bilayer. Residues 410 to 417 (TFCAPCIP) are Extracellular-facing. A disulfide bridge links Cys-412 with Cys-415. A helical transmembrane segment spans residues 418–441 (NTVWTIGYWLCYINSTINPACYAL). Positions 435 to 439 (NPACY) match the Important for signaling motif. The Cytoplasmic portion of the chain corresponds to 442–465 (CNATFKKTFKHLLMCHYKNIGATR). Thr-445, Thr-449, and Thr-464 each carry phosphothreonine.

This sequence belongs to the G-protein coupled receptor 1 family. Muscarinic acetylcholine receptor subfamily. CHRM2 sub-subfamily. Interacts with ARRB1 and ARRB2. Interacts with RACK1; the interaction regulates CHRM2 internalization. In terms of processing, phosphorylated in response to agonist treatment.

It is found in the cell membrane. The protein resides in the postsynaptic cell membrane. In terms of biological role, the muscarinic acetylcholine receptor mediates various cellular responses, including inhibition of adenylate cyclase, breakdown of phosphoinositides and modulation of potassium channels through the action of G proteins. Primary transducing effect is adenylate cyclase inhibition. Signaling promotes phospholipase C activity, leading to the release of inositol trisphosphate (IP3); this then triggers calcium ion release into the cytosol. The polypeptide is Muscarinic acetylcholine receptor M2 (CHRM2) (Bos taurus (Bovine)).